The chain runs to 183 residues: MDEVEFILEEAKEGMEKAITHLKKQLSNIRAGKASPSMLGSVMVEYYGSQTPLQQVANVNTPDARTLSIQPFEKSLITEIERGIMLANLGFNPMNNGESVIINVPPLTEERRKQLSKQAKAEAEDAKVGVRNDRKQAMQELKKADISEDLLKSSEDEVQELTNTYIERIDKILTVKETEIMTV.

The protein belongs to the RRF family.

Its subcellular location is the cytoplasm. Its function is as follows. Responsible for the release of ribosomes from messenger RNA at the termination of protein biosynthesis. May increase the efficiency of translation by recycling ribosomes from one round of translation to another. This chain is Ribosome-recycling factor, found in Christiangramia forsetii (strain DSM 17595 / CGMCC 1.15422 / KT0803) (Gramella forsetii).